The following is an 812-amino-acid chain: Zn(2)-C6 fungal-type transcription factor pigI (812 aa).

The segment at 42 to 74 is disordered; sequence GCLHPRSPPRDRTAMADNSNSSPPASRRREKPQ. The segment at residues 77–105 is a DNA-binding region (zn(2)-C6 fungal-type); it reads CTLCRRRKLRCDRRQPCETCVRRGLSLSC.

The protein resides in the nucleus. Its function is as follows. Zn(2)-C6 fungal-type transcription factor; part of the gene cluster that mediates the biosynthesis of azaphilone pigments (MonAzPs), a complex mixture of compounds with a common azaphilone skeleton very widely used as food colorants. Acts probably as a negative regulator of the azaphilone pigments (MonAzPs) gene cluster. The sequence is that of Zn(2)-C6 fungal-type transcription factor pigI from Monascus ruber (Mold).